Consider the following 245-residue polypeptide: rRNA adenine N-6-methyltransferase (245 aa).

Residues Asn-10, Leu-12, Gly-37, Glu-58, Asp-83, and Ser-100 each coordinate S-adenosyl-L-methionine.

The protein belongs to the class I-like SAM-binding methyltransferase superfamily. rRNA adenine N(6)-methyltransferase family.

It carries out the reaction adenosine(2085) in 23S rRNA + 2 S-adenosyl-L-methionine = N(6)-dimethyladenosine(2085) in 23S rRNA + 2 S-adenosyl-L-homocysteine + 2 H(+). This protein produces a dimethylation of the adenine residue at position 2085 in 23S rRNA, resulting in reduced affinity between ribosomes and macrolide-lincosamide-streptogramin B antibiotics. The chain is rRNA adenine N-6-methyltransferase from Streptococcus sanguinis.